The chain runs to 376 residues: Queuine tRNA-ribosyltransferase (376 aa).

Asp-89 acts as the Proton acceptor in catalysis. Residues 89–93 (DSGGF), Asp-143, Gln-194, and Gly-221 each bind substrate. The segment at 252 to 258 (GVGTPAN) is RNA binding. The Nucleophile role is filled by Asp-271. Positions 309, 311, 314, and 340 each coordinate Zn(2+).

It belongs to the queuine tRNA-ribosyltransferase family. In terms of assembly, homodimer. Within each dimer, one monomer is responsible for RNA recognition and catalysis, while the other monomer binds to the replacement base PreQ1. Zn(2+) serves as cofactor.

It carries out the reaction 7-aminomethyl-7-carbaguanine + guanosine(34) in tRNA = 7-aminomethyl-7-carbaguanosine(34) in tRNA + guanine. It participates in tRNA modification; tRNA-queuosine biosynthesis. Its function is as follows. Catalyzes the base-exchange of a guanine (G) residue with the queuine precursor 7-aminomethyl-7-deazaguanine (PreQ1) at position 34 (anticodon wobble position) in tRNAs with GU(N) anticodons (tRNA-Asp, -Asn, -His and -Tyr). Catalysis occurs through a double-displacement mechanism. The nucleophile active site attacks the C1' of nucleotide 34 to detach the guanine base from the RNA, forming a covalent enzyme-RNA intermediate. The proton acceptor active site deprotonates the incoming PreQ1, allowing a nucleophilic attack on the C1' of the ribose to form the product. After dissociation, two additional enzymatic reactions on the tRNA convert PreQ1 to queuine (Q), resulting in the hypermodified nucleoside queuosine (7-(((4,5-cis-dihydroxy-2-cyclopenten-1-yl)amino)methyl)-7-deazaguanosine). The chain is Queuine tRNA-ribosyltransferase from Clostridium kluyveri (strain NBRC 12016).